A 491-amino-acid chain; its full sequence is 2-aminomuconic 6-semialdehyde dehydrogenase (491 aa).

Active-site residues include glutamate 252 and cysteine 286.

It belongs to the aldehyde dehydrogenase family. Homotrimer.

The catalysed reaction is 2-aminomuconate 6-semialdehyde + NAD(+) + H2O = (2Z,4E)-2-aminomuconate + NADH + 2 H(+). Strongly inhibited by Ag(+) and Hg(+), and comnpletely inhibited by p-chloromercuribenzoic acid. Its function is as follows. Involved in the modified meta-cleavage pathway for 2-aminophenol catabolism. The enzyme is also active toward 2-hydroxymuconic 6-semialdehyde, acetaldehyde, propionaldehyde, and butyraldehyde. The chain is 2-aminomuconic 6-semialdehyde dehydrogenase (amnC) from Pseudomonas sp.